The following is a 101-amino-acid chain: Small ribosomal subunit protein uS14 (101 aa).

It belongs to the universal ribosomal protein uS14 family. Part of the 30S ribosomal subunit. Contacts proteins S3 and S10.

Binds 16S rRNA, required for the assembly of 30S particles and may also be responsible for determining the conformation of the 16S rRNA at the A site. The protein is Small ribosomal subunit protein uS14 of Methylorubrum populi (strain ATCC BAA-705 / NCIMB 13946 / BJ001) (Methylobacterium populi).